Consider the following 138-residue polypeptide: Small ribosomal subunit protein uS11c (138 aa).

A disordered region spans residues 1-24 (MTKPIPRIGSRKNGRISSRKNGRR). The span at 9–24 (GSRKNGRISSRKNGRR) shows a compositional bias: basic residues.

This sequence belongs to the universal ribosomal protein uS11 family. In terms of assembly, part of the 30S ribosomal subunit.

The protein resides in the plastid. It localises to the chloroplast. This is Small ribosomal subunit protein uS11c from Chloranthus spicatus (Chulantree).